A 161-amino-acid chain; its full sequence is Cap-associated protein CAF20 (161 aa).

Over residues 52 to 72 (HFGRRRSSHHHGRPKIKHNKP) the composition is skewed to basic residues. A disordered region spans residues 52–108 (HFGRRRSSHHHGRPKIKHNKPKVTTDSDGWCTFEAKKKGSGEDDEEETETTPTSTVP). S78 and S91 each carry phosphoserine. A phosphothreonine mark is found at T99, T101, and T102. Residue S154 is modified to Phosphoserine.

This sequence belongs to the CAF20 family. Interacts with TIF45. In terms of processing, phosphorylated by casein kinase II complex (CK2).

The protein resides in the cytoplasm. In terms of biological role, acts as an inhibitor of cap-dependent translation. Competes with eIF4G1/TIF4631 and EAP1 for binding to eIF4E/TIF45 and interferes with the formation of the eIF4F complex, inhibiting translation and stabilizing mRNA. Binding affinity for eIF4E/TIF45 is 10-fold less than that of eIF4G1/TIF4631. Required for induction of pseudohyphal growth in response to nitrogen limitation, probably by regulating STE12 translation. The protein is Cap-associated protein CAF20 (CAF20) of Saccharomyces cerevisiae (strain YJM789) (Baker's yeast).